The following is a 176-amino-acid chain: TDYLVSKWKIWYKSLDVNHDGIISIENVEESRNKFTDLHKLVGDKSTGVKVDMQKWWDTYIFLTPGAEISETQFVENLGNSFKKDKAFLATMTACFNMIFDVIDTDKDRSIDLNEFIYAFAAFGHENESVVRTAFALLKPDDDNTVPLRTVVDAWISFVTCEDASKTDVIKSAFES.

At threonine 1 the chain carries N-acetylthreonine. EF-hand domains lie at 3–38 (YLVSKWKIWYKSLDVNHDGIISIENVEESRNKFTDL), 55–90 (KWWDTYIFLTPGAEISETQFVENLGNSFKKDKAFLA), 91–126 (TMTACFNMIFDVIDTDKDRSIDLNEFIYAFAAFGHE), and 127–160 (NESVVRTAFALLKPDDDNTVPLRTVVDAWISFVT). Ca(2+)-binding residues include aspartate 16, asparagine 18, aspartate 20, and asparagine 27. Ca(2+)-binding residues include aspartate 104, aspartate 106, aspartate 108, serine 110, and glutamate 115.

In terms of biological role, like parvalbumins, SCPs seem to be more abundant in fast contracting muscles, but no functional relationship can be established from this distribution. This is Sarcoplasmic calcium-binding protein from Mizuhopecten yessoensis (Japanese scallop).